We begin with the raw amino-acid sequence, 174 residues long: Thiol-disulfide oxidoreductase ResA (174 aa).

The helical; Signal-anchor for type II membrane protein transmembrane segment at 11-30 (TAILLVLLAAIGYTIYTNFF) threads the bilayer. One can recognise a Thioredoxin domain in the interval 36–174 (VAVGSTAPDF…IERHLESIKP (139 aa)). Residues Cys74 and Cys77 are joined by a disulfide bond.

Belongs to the thioredoxin family. ResA subfamily.

The protein localises to the cell membrane. Its pathway is protein modification; cytochrome c assembly. Functionally, thiol-disulfide oxidoreductase which is required in disulfide reduction during c-type cytochrome synthesis. May accept reducing equivalents from CcdA, leading to breakage of disulfide bonds in apocytochrome c; following this reduction heme can be covalently attached. In Geobacillus kaustophilus (strain HTA426), this protein is Thiol-disulfide oxidoreductase ResA.